Consider the following 557-residue polypeptide: Formate--tetrahydrofolate ligase (557 aa).

67–74 (TPAGEGKT) contributes to the ATP binding site.

The protein belongs to the formate--tetrahydrofolate ligase family.

It carries out the reaction (6S)-5,6,7,8-tetrahydrofolate + formate + ATP = (6R)-10-formyltetrahydrofolate + ADP + phosphate. It participates in one-carbon metabolism; tetrahydrofolate interconversion. This chain is Formate--tetrahydrofolate ligase, found in Cereibacter sphaeroides (strain ATCC 17025 / ATH 2.4.3) (Rhodobacter sphaeroides).